A 404-amino-acid polypeptide reads, in one-letter code: Probable tRNA sulfurtransferase (404 aa).

A THUMP domain is found at Arg-60–Asp-165. Residues Met-183–Leu-184, His-208–Phe-209, Arg-265, Gly-287, and Gln-296 each bind ATP.

The protein belongs to the ThiI family.

It is found in the cytoplasm. It catalyses the reaction [ThiI sulfur-carrier protein]-S-sulfanyl-L-cysteine + a uridine in tRNA + 2 reduced [2Fe-2S]-[ferredoxin] + ATP + H(+) = [ThiI sulfur-carrier protein]-L-cysteine + a 4-thiouridine in tRNA + 2 oxidized [2Fe-2S]-[ferredoxin] + AMP + diphosphate. It carries out the reaction [ThiS sulfur-carrier protein]-C-terminal Gly-Gly-AMP + S-sulfanyl-L-cysteinyl-[cysteine desulfurase] + AH2 = [ThiS sulfur-carrier protein]-C-terminal-Gly-aminoethanethioate + L-cysteinyl-[cysteine desulfurase] + A + AMP + 2 H(+). The protein operates within cofactor biosynthesis; thiamine diphosphate biosynthesis. In terms of biological role, catalyzes the ATP-dependent transfer of a sulfur to tRNA to produce 4-thiouridine in position 8 of tRNAs, which functions as a near-UV photosensor. Also catalyzes the transfer of sulfur to the sulfur carrier protein ThiS, forming ThiS-thiocarboxylate. This is a step in the synthesis of thiazole, in the thiamine biosynthesis pathway. The sulfur is donated as persulfide by IscS. The protein is Probable tRNA sulfurtransferase of Streptococcus equi subsp. zooepidemicus (strain H70).